Here is an 85-residue protein sequence, read N- to C-terminus: Large ribosomal subunit protein bL27 (85 aa).

Residues 1–20 are disordered; sequence MAHKKAGGSTRNGRDSESKR.

It belongs to the bacterial ribosomal protein bL27 family.

The chain is Large ribosomal subunit protein bL27 from Azotobacter vinelandii (strain DJ / ATCC BAA-1303).